Reading from the N-terminus, the 63-residue chain is LTCVTGKSIGGISTEECAAGQKICNKKWTKMGPKLYDVSRGCTATCPKADEYGCVKCCNTDRN.

Cystine bridges form between Cys-3–Cys-24, Cys-17–Cys-42, and Cys-46–Cys-57.

The protein belongs to the three-finger toxin family. Short-chain subfamily. Aminergic toxin sub-subfamily. As to quaternary structure, heterodimer of C9S3 chain 1 (AC P01408) and chain 2, linked by at least two disulfide bonds. As to expression, expressed by the venom gland.

Its subcellular location is the secreted. Functionally, this protein shows a synergetic toxic effect in that it enhances the toxicity of other D.angusticeps toxins. The polypeptide is Synergistic-type venom protein C9S3, chain 2 (Dendroaspis angusticeps (Eastern green mamba)).